Reading from the N-terminus, the 477-residue chain is Glycogen synthase (477 aa).

K16 is a binding site for ADP-alpha-D-glucose.

The protein belongs to the glycosyltransferase 1 family. Bacterial/plant glycogen synthase subfamily.

It catalyses the reaction [(1-&gt;4)-alpha-D-glucosyl](n) + ADP-alpha-D-glucose = [(1-&gt;4)-alpha-D-glucosyl](n+1) + ADP + H(+). Its pathway is glycan biosynthesis; glycogen biosynthesis. Functionally, synthesizes alpha-1,4-glucan chains using ADP-glucose. The sequence is that of Glycogen synthase from Oceanobacillus iheyensis (strain DSM 14371 / CIP 107618 / JCM 11309 / KCTC 3954 / HTE831).